The chain runs to 217 residues: Ribosomal RNA small subunit methyltransferase G (217 aa).

S-adenosyl-L-methionine is bound by residues Gly74, Leu79, Ile125–Gln126, and Arg143.

This sequence belongs to the methyltransferase superfamily. RNA methyltransferase RsmG family.

It localises to the cytoplasm. The enzyme catalyses guanosine(527) in 16S rRNA + S-adenosyl-L-methionine = N(7)-methylguanosine(527) in 16S rRNA + S-adenosyl-L-homocysteine. In terms of biological role, specifically methylates the N7 position of guanine in position 527 of 16S rRNA. The sequence is that of Ribosomal RNA small subunit methyltransferase G from Syntrophotalea carbinolica (strain DSM 2380 / NBRC 103641 / GraBd1) (Pelobacter carbinolicus).